We begin with the raw amino-acid sequence, 508 residues long: GMP synthase [glutamine-hydrolyzing] (508 aa).

The 189-residue stretch at 1 to 189 (MIVVLDFGSQ…ALLVCGCEKT (189 aa)) folds into the Glutamine amidotransferase type-1 domain. Cys-78 (nucleophile) is an active-site residue. Residues His-163 and Glu-165 contribute to the active site. The 194-residue stretch at 190 to 383 (WGMQNFAQKE…LGVSQDFLMR (194 aa)) folds into the GMPS ATP-PPase domain. Residue 217–223 (SGGVDST) coordinates ATP.

As to quaternary structure, homodimer.

It carries out the reaction XMP + L-glutamine + ATP + H2O = GMP + L-glutamate + AMP + diphosphate + 2 H(+). Its pathway is purine metabolism; GMP biosynthesis; GMP from XMP (L-Gln route): step 1/1. In terms of biological role, catalyzes the synthesis of GMP from XMP. This Helicobacter acinonychis (strain Sheeba) protein is GMP synthase [glutamine-hydrolyzing].